The primary structure comprises 187 residues: Holliday junction resolvase (187 aa).

This sequence belongs to the RuvC family. Poxviruses-type subfamily. Requires Mg(2+) as cofactor. Post-translationally, acylated by palmitic acid group(s).

The protein localises to the membrane. In terms of biological role, nuclease that specifically cleaves and resolves four-way DNA Holliday junctions into linear duplex products. This chain is Holliday junction resolvase, found in Vaccinia virus (strain Ankara) (VACV).